The following is a 421-amino-acid chain: MAGEAEAQLDPSLQGLVMFEDVTVYFSREEWGLLNVTQKGLYRDVMLENFALVSSLGLAPSRSPVFTQLEDDEQSWVPSWVDVTPVSRAEARRGFGLDGLCRVEDERAHPEHLKSYRVIQHQDTHSEGKPRRHTEHGAAFPPGSSCGQQQEVHVAEKLFKCSDCGKVFLKAFALLDHLITHSEERPFRCPTGRSAFKKSAHINPRKIHTGETAHVCNECGKAFSYPSKLRKHQKVHTGIKPFKCSDCGKTFNRKDALVLHQRIHTGERPYECSKCGKTFSVLSTLIRHRKVHIGERPYECTECGKFFKYNNSFILHQRVHTGERPFECKQCGKGYVTRSGLYQHWKVHTGERPYECSLCGKTFTTRSYRNRHQQFHTEERSYECTECGKAFKHSSTLLQHKKVHTPERRQEDRAHGKVVSC.

The KRAB domain maps to 17 to 88 (VMFEDVTVYF…SWVDVTPVSR (72 aa)). The segment covering 120–129 (QHQDTHSEGK) has biased composition (basic and acidic residues). The tract at residues 120–146 (QHQDTHSEGKPRRHTEHGAAFPPGSSC) is disordered. 8 consecutive C2H2-type zinc fingers follow at residues 159 to 181 (FKCS…LITH), 214 to 236 (HVCN…QKVH), 242 to 264 (FKCS…QRIH), 270 to 292 (YECS…RKVH), 298 to 320 (YECT…QRVH), 326 to 348 (FECK…WKVH), 354 to 376 (YECS…QQFH), and 382 to 404 (YECT…KKVH). The interval 402–421 (KVHTPERRQEDRAHGKVVSC) is disordered. Residues 404–415 (HTPERRQEDRAH) show a composition bias toward basic and acidic residues.

This sequence belongs to the krueppel C2H2-type zinc-finger protein family.

The protein localises to the nucleus. Its function is as follows. May be involved in transcriptional regulation. The protein is Zinc finger protein 584 (ZNF584) of Homo sapiens (Human).